A 79-amino-acid chain; its full sequence is Major outer membrane lipoprotein Lpp 2 (79 aa).

The N-terminal stretch at 1–21 (MNRTNKLILGAVVLGSALLAG) is a signal peptide. A lipid anchor (N-palmitoyl cysteine) is attached at Cys22. The S-diacylglycerol cysteine moiety is linked to residue Cys22. 2 consecutive repeats follow at residues 25–35 (NAKIDQLSSDV) and 39–49 (SAKVDQLSNDV). Positions 28–76 (IDQLSSDVQTLSAKVDQLSNDVNAMRSDIQAAKDDAARANQRLDNKVSR) form a coiled coil. A disordered region spans residues 60-79 (KDDAARANQRLDNKVSRVRK). N6-murein peptidoglycan lysine is present on Lys79.

This sequence belongs to the Lpp family. As to quaternary structure, homotrimer.

It is found in the cell outer membrane. The protein localises to the secreted. It localises to the cell wall. A highly abundant outer membrane lipoprotein that controls the distance between the inner and outer membranes. The only protein known to be covalently linked to the peptidoglycan network (PGN). Also non-covalently binds the PGN. The link between the cell outer membrane and PGN contributes to maintenance of the structural and functional integrity of the cell envelope, and maintains the correct distance between the PGN and the outer membrane. This Salmonella paratyphi A (strain ATCC 9150 / SARB42) protein is Major outer membrane lipoprotein Lpp 2.